The chain runs to 147 residues: Putative pre-16S rRNA nuclease (147 aa).

This sequence belongs to the YqgF nuclease family.

It is found in the cytoplasm. Functionally, could be a nuclease involved in processing of the 5'-end of pre-16S rRNA. This chain is Putative pre-16S rRNA nuclease, found in Ligilactobacillus salivarius (strain UCC118) (Lactobacillus salivarius).